The primary structure comprises 669 residues: MSNQRVLYWPETYNNIKELGRGVSGVVYKASHKKTGQIVAIKLVDMKQSKISTEQIQGEIRALLTLNPENERTHINIIKLIQCFIHKTTAIFILEYVDGGTLEDFMYSFERGMPLSLISHCLYQSVNAIEYMNSKKCSHRDIKPANILMLRNRKPKLKQQSEQQQQEDGGYIRYSGQFQLEPSSQENNNYQFDPDELPILKVTDYGYASISGNDSAEIHSTLAGSPLYMAPEIIHIILSPFLEPGTGKLSADSSEGYNPLLVDVWAIGAVAFRLITGDDLISVIFPNLNQTTVLAALVNLAKMIDNGDFQKGLDSIPNEIRKYGLVDPDIELGISFITSLLQLDPKKRLPLKETLNHPFLAKGKLSFTQTLNQHYKDNKDVLGSIVPSDISNFLNQNQQQQQQQQKSFSTSSLPQVNHNNDTNNNNNNNNNNNNNNNNNNNNNNNNNNNNEKDKDNQSNNSSSSSSSSSPPSPTISKSSPSSLSSSLSPSSSTDDLPKAMKWSSSVKPPKKSNFAPTFLSHQRSDKITLFPKLLPPPTKDAPPLETMNWRSPPVEVGDSITWTTLTQDAIFQVQFSVLTSFLKVISASNSYQFRIITSLTKVPLEIAVSNHKDTILYMYNIVKSVIAPQLISLSNAFDENSIRSVLAAILYQIGTETEQAEIANCWTLV.

Residues 13–360 (YNNIKELGRG…LKETLNHPFL (348 aa)) form the Protein kinase domain. ATP-binding positions include 19 to 27 (LGRGVSGVV) and Lys-42. Catalysis depends on Asp-141, which acts as the Proton acceptor. The segment covering 396–405 (QNQQQQQQQQ) has biased composition (low complexity). Disordered regions lie at residues 396 to 518 (QNQQ…APTF) and 530 to 550 (FPKL…MNWR). Over residues 406–418 (KSFSTSSLPQVNH) the composition is skewed to polar residues. 2 stretches are compositionally biased toward low complexity: residues 419-449 (NNDT…NNNN) and 457-494 (QSNN…SSTD).

The protein belongs to the protein kinase superfamily. Ser/Thr protein kinase family.

It carries out the reaction L-seryl-[protein] + ATP = O-phospho-L-seryl-[protein] + ADP + H(+). The enzyme catalyses L-threonyl-[protein] + ATP = O-phospho-L-threonyl-[protein] + ADP + H(+). The sequence is that of Probable serine/threonine-protein kinase DDB_G0291918 from Dictyostelium discoideum (Social amoeba).